A 428-amino-acid chain; its full sequence is Serine--tRNA ligase (428 aa).

235 to 237 provides a ligand contact to L-serine; sequence TAE. Residue 266-268 participates in ATP binding; it reads RSE. Glu-289 is a binding site for L-serine. 353 to 356 lines the ATP pocket; it reads EISS. Position 389 (Ser-389) interacts with L-serine.

This sequence belongs to the class-II aminoacyl-tRNA synthetase family. Type-1 seryl-tRNA synthetase subfamily. In terms of assembly, homodimer. The tRNA molecule binds across the dimer.

The protein localises to the cytoplasm. It carries out the reaction tRNA(Ser) + L-serine + ATP = L-seryl-tRNA(Ser) + AMP + diphosphate + H(+). It catalyses the reaction tRNA(Sec) + L-serine + ATP = L-seryl-tRNA(Sec) + AMP + diphosphate + H(+). It functions in the pathway aminoacyl-tRNA biosynthesis; selenocysteinyl-tRNA(Sec) biosynthesis; L-seryl-tRNA(Sec) from L-serine and tRNA(Sec): step 1/1. Functionally, catalyzes the attachment of serine to tRNA(Ser). Is also able to aminoacylate tRNA(Sec) with serine, to form the misacylated tRNA L-seryl-tRNA(Sec), which will be further converted into selenocysteinyl-tRNA(Sec). This is Serine--tRNA ligase from Shewanella pealeana (strain ATCC 700345 / ANG-SQ1).